The following is a 287-amino-acid chain: uncharacterized protein (287 aa).

The next 7 helical transmembrane spans lie at 27–47 (LTFS…FGVQ), 66–86 (LGTI…VTAF), 97–117 (WFWG…GVLL), 135–155 (IVFA…LSAL), 171–191 (IFIW…VLNF), 205–225 (LFPG…VYFV), and 254–274 (SALF…YFIL).

It is found in the cell membrane. This is an uncharacterized protein from Mycoplasma pneumoniae (strain ATCC 29342 / M129 / Subtype 1) (Mycoplasmoides pneumoniae).